We begin with the raw amino-acid sequence, 375 residues long: PqqA peptide cyclase (375 aa).

Positions 18 to 235 (ILPPMAMLAE…EAREKYQGIL (218 aa)) constitute a Radical SAM core domain. Residues cysteine 32, cysteine 36, and cysteine 39 each coordinate [4Fe-4S] cluster.

Belongs to the radical SAM superfamily. PqqE family. Interacts with PqqD. The interaction is necessary for activity of PqqE. The cofactor is [4Fe-4S] cluster.

It carries out the reaction [PQQ precursor protein] + S-adenosyl-L-methionine = E-Y cross-linked-[PQQ precursor protein] + 5'-deoxyadenosine + L-methionine + H(+). It functions in the pathway cofactor biosynthesis; pyrroloquinoline quinone biosynthesis. Functionally, catalyzes the cross-linking of a glutamate residue and a tyrosine residue in the PqqA protein as part of the biosynthesis of pyrroloquinoline quinone (PQQ). The chain is PqqA peptide cyclase from Rhizobium meliloti (strain 1021) (Ensifer meliloti).